Consider the following 389-residue polypeptide: Growth/differentiation factor 2 (389 aa).

Positions methionine 1–glutamate 20 are cleaved as a signal peptide. A propeptide spanning residues lysine 21–lysine 280 is cleaved from the precursor. Asparagine 65, asparagine 118, asparagine 127, and asparagine 232 each carry an N-linked (GlcNAc...) asparagine glycan. Positions glutamine 263–valine 272 are enriched in polar residues. Positions glutamine 263–lysine 284 are disordered. Over residues asparagine 274 to lysine 284 the composition is skewed to basic residues. 3 disulfides stabilise this stretch: cysteine 288–cysteine 354, cysteine 317–cysteine 386, and cysteine 321–cysteine 388. The N-linked (GlcNAc...) asparagine glycan is linked to asparagine 342.

The protein belongs to the TGF-beta family. As to quaternary structure, homodimer; disulfide-linked. In terms of processing, a reversible disulfide bond can be formed between the two subunits in the homodimer; this has no effect on gdf2 activity.

The protein resides in the secreted. Potent circulating inhibitor of angiogenesis. Signals through the type I activin receptor ACVRL1 but not other Alks. Signaling through SMAD1 in endothelial cells requires TGF-beta coreceptor endoglin/eng. The chain is Growth/differentiation factor 2 (gdf2) from Danio rerio (Zebrafish).